The following is a 359-amino-acid chain: Chorismate synthase (359 aa).

Residues arginine 48 and arginine 54 each contribute to the NADP(+) site. Residues 129 to 131 (RSS), 241 to 242 (NA), glycine 285, 300 to 304 (KPTSS), and arginine 326 contribute to the FMN site.

This sequence belongs to the chorismate synthase family. Homotetramer. FMNH2 is required as a cofactor.

The enzyme catalyses 5-O-(1-carboxyvinyl)-3-phosphoshikimate = chorismate + phosphate. Its pathway is metabolic intermediate biosynthesis; chorismate biosynthesis; chorismate from D-erythrose 4-phosphate and phosphoenolpyruvate: step 7/7. Functionally, catalyzes the anti-1,4-elimination of the C-3 phosphate and the C-6 proR hydrogen from 5-enolpyruvylshikimate-3-phosphate (EPSP) to yield chorismate, which is the branch point compound that serves as the starting substrate for the three terminal pathways of aromatic amino acid biosynthesis. This reaction introduces a second double bond into the aromatic ring system. In Afipia carboxidovorans (strain ATCC 49405 / DSM 1227 / KCTC 32145 / OM5) (Oligotropha carboxidovorans), this protein is Chorismate synthase.